A 393-amino-acid polypeptide reads, in one-letter code: Phosphoglycerate kinase (393 aa).

Substrate-binding positions include 21 to 23, Arg-36, 59 to 62, Arg-118, and Arg-151; these read DFN and HLGR. ATP is bound by residues Lys-201, Glu-323, and 349-352; that span reads GGDS.

The protein belongs to the phosphoglycerate kinase family. As to quaternary structure, monomer.

The protein localises to the cytoplasm. The enzyme catalyses (2R)-3-phosphoglycerate + ATP = (2R)-3-phospho-glyceroyl phosphate + ADP. Its pathway is carbohydrate degradation; glycolysis; pyruvate from D-glyceraldehyde 3-phosphate: step 2/5. This chain is Phosphoglycerate kinase, found in Moorella thermoacetica (strain ATCC 39073 / JCM 9320).